Consider the following 560-residue polypeptide: Glycolate permease GlcA (560 aa).

At 1–13 (MVTWTQMYMPMGG) the chain is on the cytoplasmic side. A helical membrane pass occupies residues 14–34 (LGLSALVALIPIIFFFVALAV). Over 35-41 (LRLKGHV) the chain is Periplasmic. A helical transmembrane segment spans residues 42–62 (AGAITLILSILIAIFAFKMPI). The Cytoplasmic segment spans residues 63 to 69 (DMAFAAA). A helical membrane pass occupies residues 70 to 90 (GYGFIYGLWPIAWIIVAAVFL). The Periplasmic portion of the chain corresponds to 91 to 130 (YKLTVASGQFDIIRSSVISITDDQRLQVLLIGFSFGALLE). Residues 131-151 (GAAGFGAPVAITGALLVGLGF) form a helical membrane-spanning segment. Topologically, residues 152–158 (KPLYAAG) are cytoplasmic. A helical transmembrane segment spans residues 159–179 (LCLIANTAPVAFGALGVPILV). Residues 180–199 (AGQVTGIDPFHIGAMAGRQL) are Periplasmic-facing. Residues 200–220 (PFLSVLVPFWLVAMMDGWKGV) form a helical membrane-spanning segment. The Cytoplasmic portion of the chain corresponds to 221–225 (KETWP). A helical transmembrane segment spans residues 226–246 (AALVAGGSFAVTQFFTSNYIG). Over 247–248 (PE) the chain is Periplasmic. The chain crosses the membrane as a helical span at residues 249–269 (LPDITSALVSIVSLALFLKVW). The Cytoplasmic portion of the chain corresponds to 270–313 (RPKNTETAISMGQSAGAMVVNKPSSGGPVPSEYSLGQIIRAWSP). Residues 314-334 (FLILTVLVTIWTMKPFKALFA) form a helical membrane-spanning segment. The Periplasmic portion of the chain corresponds to 335–378 (PGGAFYSLVINFQIPHLHQQVLKAAPIVAQPTPMDAVFKFDPLS). The chain crosses the membrane as a helical span at residues 379–399 (AGGTAIFIAAIISIFILGVGI). Residues 400–408 (KKGIGVFAE) lie on the Cytoplasmic side of the membrane. A helical membrane pass occupies residues 409-429 (TLISLKWPILSIGMVLAFAFV). At 430–438 (TNYSGMSTT) the chain is on the periplasmic side. The helical transmembrane segment at 439–459 (LALVLAGTGVMFPFFSPFLGW) threads the bilayer. Residues 460-536 (LGVFLTGSDT…ELFRYTVKHS (77 aa)) are Cytoplasmic-facing. Residues 537-557 (LIFASVIGIITLLQAYVFTGM) form a helical membrane-spanning segment. Residues 558-560 (LVS) lie on the Periplasmic side of the membrane.

Belongs to the lactate permease family.

The protein resides in the cell inner membrane. It carries out the reaction glycolate(in) + H(+)(in) = glycolate(out) + H(+)(out). It catalyses the reaction (S)-lactate(in) + H(+)(in) = (S)-lactate(out) + H(+)(out). The catalysed reaction is (R)-lactate(in) + H(+)(in) = (R)-lactate(out) + H(+)(out). Its activity is regulated as follows. Inhibited by the proton ionophore carbonyl cyanide m-chlorophenylhydrazone (CCCP). Its function is as follows. Uptake of glycolate across the membrane. Can also transport L-lactate and D-lactate. Seems to be driven by a proton motive force. This chain is Glycolate permease GlcA, found in Escherichia coli (strain K12).